The primary structure comprises 198 residues: Pyridoxal 5'-phosphate synthase subunit PdxT (198 aa).

An L-glutamine-binding site is contributed by 49–51; it reads GES. Cys81 functions as the Nucleophile in the catalytic mechanism. Residues Arg113 and 141 to 142 contribute to the L-glutamine site; that span reads IR. Catalysis depends on charge relay system residues His177 and Glu179.

The protein belongs to the glutaminase PdxT/SNO family. In terms of assembly, in the presence of PdxS, forms a dodecamer of heterodimers. Only shows activity in the heterodimer.

It carries out the reaction aldehydo-D-ribose 5-phosphate + D-glyceraldehyde 3-phosphate + L-glutamine = pyridoxal 5'-phosphate + L-glutamate + phosphate + 3 H2O + H(+). The enzyme catalyses L-glutamine + H2O = L-glutamate + NH4(+). The protein operates within cofactor biosynthesis; pyridoxal 5'-phosphate biosynthesis. Its function is as follows. Catalyzes the hydrolysis of glutamine to glutamate and ammonia as part of the biosynthesis of pyridoxal 5'-phosphate. The resulting ammonia molecule is channeled to the active site of PdxS. This is Pyridoxal 5'-phosphate synthase subunit PdxT from Mycobacterium ulcerans (strain Agy99).